Consider the following 274-residue polypeptide: Large ribosomal subunit protein uL2cy (274 aa).

Disordered stretches follow at residues 1–25 (MAIH…VKSN) and 223–274 (MNPV…RRSK). Polar residues predominate over residues 7 to 25 (KTSTPSTRNGTVDSQVKSN).

Belongs to the universal ribosomal protein uL2 family. As to quaternary structure, part of the 50S ribosomal subunit.

Its subcellular location is the plastid. The protein resides in the chloroplast. This is Large ribosomal subunit protein uL2cy (rpl2-B) from Atropa belladonna (Belladonna).